The sequence spans 151 residues: Small ribosomal subunit protein uS13 (151 aa).

The interval arginine 131 to glutamine 151 is disordered. A compositionally biased stretch (basic residues) spans glutamine 133 to glutamine 151.

Belongs to the universal ribosomal protein uS13 family. As to quaternary structure, part of the 30S ribosomal subunit. Forms a loose heterodimer with protein S19. Forms two bridges to the 50S subunit in the 70S ribosome.

Functionally, located at the top of the head of the 30S subunit, it contacts several helices of the 16S rRNA. In the 70S ribosome it contacts the 23S rRNA (bridge B1a) and protein L5 of the 50S subunit (bridge B1b), connecting the 2 subunits; these bridges are implicated in subunit movement. This chain is Small ribosomal subunit protein uS13, found in Methanopyrus kandleri (strain AV19 / DSM 6324 / JCM 9639 / NBRC 100938).